Here is a 91-residue protein sequence, read N- to C-terminus: Putative regulatory protein CLB_2388 (91 aa).

Belongs to the RemA family.

The protein is Putative regulatory protein CLB_2388 of Clostridium botulinum (strain ATCC 19397 / Type A).